We begin with the raw amino-acid sequence, 514 residues long: Peptide chain release factor 3 (514 aa).

The 261-residue stretch at lysine 8–histidine 268 folds into the tr-type G domain. GTP contacts are provided by residues serine 17–threonine 24, aspartate 85–histidine 89, and asparagine 139–aspartate 142.

Belongs to the TRAFAC class translation factor GTPase superfamily. Classic translation factor GTPase family. PrfC subfamily.

It localises to the cytoplasm. In terms of biological role, increases the formation of ribosomal termination complexes and stimulates activities of RF-1 and RF-2. It binds guanine nucleotides and has strong preference for UGA stop codons. It may interact directly with the ribosome. The stimulation of RF-1 and RF-2 is significantly reduced by GTP and GDP, but not by GMP. In Streptococcus agalactiae serotype Ia (strain ATCC 27591 / A909 / CDC SS700), this protein is Peptide chain release factor 3.